The chain runs to 410 residues: Regulator of microtubule dynamics protein 2 (410 aa).

The helical transmembrane segment at 9-28 (LILGIMAGTAGISLLAFWYH) threads the bilayer. The residue at position 51 (Ser-51) is a Phosphoserine. Positions 69-110 (QRRQLQILEKLNELLTNMEELKEEIRFLKETIPKLEECIQDE) form a coiled coil. The segment at 120–151 (ISPQHRARKKKGTTVQRSATSNSSEEAESEGG) is disordered. Ser-121 carries the post-translational modification Phosphoserine. Over residues 121 to 131 (SPQHRARKKKG) the composition is skewed to basic residues. Residue Thr-139 is modified to Phosphothreonine. Tyr-152 carries the phosphotyrosine modification. Phosphothreonine occurs at positions 154 and 157.

The protein belongs to the RMDN family. In terms of assembly, interacts with microtubules.

The protein localises to the membrane. It is found in the cytoplasm. It localises to the cytoskeleton. Its subcellular location is the spindle. The protein resides in the spindle pole. This is Regulator of microtubule dynamics protein 2 (Rmdn2) from Mus musculus (Mouse).